A 483-amino-acid chain; its full sequence is Nucleolar protein 4 (483 aa).

2 disordered regions span residues 210–418 and 435–483; these read QQDE…PIPS and SESR…DPQI. The span at 211–225 shows a compositional bias: acidic residues; it reads QDEDESSIESDEFDM. Composition is skewed to polar residues over residues 229–254, 262–271, and 302–317; these read TRMSAVNSDLSSNLEERMQSPQTVHG, AESSNGNETL, and QPLNLSDSPSSAQLTS. Composition is skewed to basic and acidic residues over residues 319 to 330 and 340 to 350; these read FRIDDQGSDGKN and LKMEREARENG. The segment covering 351–363 has biased composition (polar residues); that stretch reads SKSPAHSYSSYDS. Composition is skewed to basic and acidic residues over residues 364–374, 391–409, and 435–451; these read GKNESVDRGAE, HEDSEKVNETDGVEAERLK, and SESRNAAKRMRLDKAQD. The span at 467–483 shows a compositional bias: polar residues; it reads ATYSTATVPGSQEDPQI.

The protein localises to the nucleus. It is found in the nucleolus. In Mus musculus (Mouse), this protein is Nucleolar protein 4 (Nol4).